The sequence spans 359 residues: Glycerol-1-phosphate dehydrogenase [NAD(P)+] (359 aa).

Residues 107 to 111 and 129 to 132 each bind NAD(+); these read GRVID and TAAS. Asp-134 contributes to the substrate binding site. Ser-138 contributes to the NAD(+) binding site. Asp-181 contacts substrate. Residues Asp-181 and His-261 each contribute to the Zn(2+) site. His-265 contacts substrate. Residue His-277 participates in Zn(2+) binding.

Belongs to the glycerol-1-phosphate dehydrogenase family. It depends on Zn(2+) as a cofactor.

It localises to the cytoplasm. It catalyses the reaction sn-glycerol 1-phosphate + NAD(+) = dihydroxyacetone phosphate + NADH + H(+). The catalysed reaction is sn-glycerol 1-phosphate + NADP(+) = dihydroxyacetone phosphate + NADPH + H(+). The protein operates within membrane lipid metabolism; glycerophospholipid metabolism. Its function is as follows. Catalyzes the NAD(P)H-dependent reduction of dihydroxyacetonephosphate (DHAP or glycerone phosphate) to glycerol 1-phosphate (G1P). The G1P thus generated is used as the glycerophosphate backbone of phospholipids in the cellular membranes of Archaea. The polypeptide is Glycerol-1-phosphate dehydrogenase [NAD(P)+] (Methanospirillum hungatei JF-1 (strain ATCC 27890 / DSM 864 / NBRC 100397 / JF-1)).